Consider the following 340-residue polypeptide: Deubiquitinase SseL (340 aa).

The active site involves histidine 223. Cysteine 285 functions as the Nucleophile in the catalytic mechanism.

It belongs to the peptidase C79 family.

It localises to the secreted. Its subcellular location is the host cytoplasm. Functionally, effector proteins function to alter host cell physiology and promote bacterial survival in host tissues. This protease targets the host cell ubiquitin pathway by acting as a deubiquitinase in infected host cells. Specifically hydrolyzes mono- and polyubiquitin substrates in vitro with a preference for 'Lys-63'-linked ubiquitin chains, suggesting that it interferes with a signaling pathway rather than inhibiting proteasomal-dependent degradation of its targets. Does not possess desumoylating activity. Is required for the Salmonella-induced delayed cytotoxicity in macrophages and full virulence. Is not required for intracellular bacterial replication. This chain is Deubiquitinase SseL (sseL), found in Salmonella typhimurium (strain LT2 / SGSC1412 / ATCC 700720).